The sequence spans 270 residues: 4-hydroxy-tetrahydrodipicolinate reductase (270 aa).

Residues 8-13 (GALGRM), aspartate 34, 102-104 (GTT), and 128-131 (SQNY) each bind NAD(+). Residue histidine 160 is the Proton donor/acceptor of the active site. Histidine 161 contributes to the (S)-2,3,4,5-tetrahydrodipicolinate binding site. Catalysis depends on lysine 164, which acts as the Proton donor. 170-171 (GT) lines the (S)-2,3,4,5-tetrahydrodipicolinate pocket.

Belongs to the DapB family.

The protein resides in the cytoplasm. The catalysed reaction is (S)-2,3,4,5-tetrahydrodipicolinate + NAD(+) + H2O = (2S,4S)-4-hydroxy-2,3,4,5-tetrahydrodipicolinate + NADH + H(+). The enzyme catalyses (S)-2,3,4,5-tetrahydrodipicolinate + NADP(+) + H2O = (2S,4S)-4-hydroxy-2,3,4,5-tetrahydrodipicolinate + NADPH + H(+). It functions in the pathway amino-acid biosynthesis; L-lysine biosynthesis via DAP pathway; (S)-tetrahydrodipicolinate from L-aspartate: step 4/4. Catalyzes the conversion of 4-hydroxy-tetrahydrodipicolinate (HTPA) to tetrahydrodipicolinate. This Methanococcus maripaludis (strain C6 / ATCC BAA-1332) protein is 4-hydroxy-tetrahydrodipicolinate reductase.